Here is a 233-residue protein sequence, read N- to C-terminus: Pyridoxal 5'-phosphate synthase subunit PdxT (233 aa).

61-63 serves as a coordination point for L-glutamine; sequence GES. Residue C93 is the Nucleophile of the active site. Residues R127 and 163 to 164 each bind L-glutamine; that span reads IR. Active-site charge relay system residues include H212 and E214.

It belongs to the glutaminase PdxT/SNO family. In the presence of PdxS, forms a dodecamer of heterodimers. Only shows activity in the heterodimer.

It catalyses the reaction aldehydo-D-ribose 5-phosphate + D-glyceraldehyde 3-phosphate + L-glutamine = pyridoxal 5'-phosphate + L-glutamate + phosphate + 3 H2O + H(+). The enzyme catalyses L-glutamine + H2O = L-glutamate + NH4(+). It participates in cofactor biosynthesis; pyridoxal 5'-phosphate biosynthesis. Functionally, catalyzes the hydrolysis of glutamine to glutamate and ammonia as part of the biosynthesis of pyridoxal 5'-phosphate. The resulting ammonia molecule is channeled to the active site of PdxS. The polypeptide is Pyridoxal 5'-phosphate synthase subunit PdxT (Paenarthrobacter aurescens (strain TC1)).